Here is an 89-residue protein sequence, read N- to C-terminus: Large ribosomal subunit protein eL31 (89 aa).

Belongs to the eukaryotic ribosomal protein eL31 family.

This Picrophilus torridus (strain ATCC 700027 / DSM 9790 / JCM 10055 / NBRC 100828 / KAW 2/3) protein is Large ribosomal subunit protein eL31.